Here is a 201-residue protein sequence, read N- to C-terminus: Recombination protein RecR (201 aa).

Residues Cys-57 to Cys-72 form a C4-type zinc finger. Residues Gly-81–Pro-176 form the Toprim domain.

Belongs to the RecR family.

In terms of biological role, may play a role in DNA repair. It seems to be involved in an RecBC-independent recombinational process of DNA repair. It may act with RecF and RecO. This Klebsiella pneumoniae subsp. pneumoniae (strain ATCC 700721 / MGH 78578) protein is Recombination protein RecR.